A 101-amino-acid chain; its full sequence is Large ribosomal subunit protein uL23 (101 aa).

This sequence belongs to the universal ribosomal protein uL23 family. In terms of assembly, part of the 50S ribosomal subunit. Contacts protein L29, and trigger factor when it is bound to the ribosome.

Functionally, one of the early assembly proteins it binds 23S rRNA. One of the proteins that surrounds the polypeptide exit tunnel on the outside of the ribosome. Forms the main docking site for trigger factor binding to the ribosome. The polypeptide is Large ribosomal subunit protein uL23 (Corynebacterium kroppenstedtii (strain DSM 44385 / JCM 11950 / CIP 105744 / CCUG 35717)).